The following is a 246-amino-acid chain: Biosynthetic peptidoglycan transglycosylase (246 aa).

A helical transmembrane segment spans residues S20 to L42.

This sequence belongs to the glycosyltransferase 51 family.

The protein localises to the cell inner membrane. The enzyme catalyses [GlcNAc-(1-&gt;4)-Mur2Ac(oyl-L-Ala-gamma-D-Glu-L-Lys-D-Ala-D-Ala)](n)-di-trans,octa-cis-undecaprenyl diphosphate + beta-D-GlcNAc-(1-&gt;4)-Mur2Ac(oyl-L-Ala-gamma-D-Glu-L-Lys-D-Ala-D-Ala)-di-trans,octa-cis-undecaprenyl diphosphate = [GlcNAc-(1-&gt;4)-Mur2Ac(oyl-L-Ala-gamma-D-Glu-L-Lys-D-Ala-D-Ala)](n+1)-di-trans,octa-cis-undecaprenyl diphosphate + di-trans,octa-cis-undecaprenyl diphosphate + H(+). The protein operates within cell wall biogenesis; peptidoglycan biosynthesis. Its function is as follows. Peptidoglycan polymerase that catalyzes glycan chain elongation from lipid-linked precursors. The sequence is that of Biosynthetic peptidoglycan transglycosylase from Xanthomonas campestris pv. campestris (strain 8004).